The primary structure comprises 219 residues: Small ribosomal subunit protein uS3 (219 aa).

The region spanning 38–106 is the KH type-2 domain; sequence IRKFIEKRLV…RVHINIVEIK (69 aa).

The protein belongs to the universal ribosomal protein uS3 family. In terms of assembly, part of the 30S ribosomal subunit. Forms a tight complex with proteins S10 and S14.

Functionally, binds the lower part of the 30S subunit head. Binds mRNA in the 70S ribosome, positioning it for translation. The chain is Small ribosomal subunit protein uS3 from Levilactobacillus brevis (strain ATCC 367 / BCRC 12310 / CIP 105137 / JCM 1170 / LMG 11437 / NCIMB 947 / NCTC 947) (Lactobacillus brevis).